A 695-amino-acid chain; its full sequence is WD repeat-containing protein 93 (695 aa).

Positions 1-35 are disordered; that stretch reads MSSFKGNQAQKRRLSVFPKGPLEIPSPTEADWPKD. Residues 421 to 460 form a WD repeat; that stretch reads PCAAPIVMSQISSFSSYLALVCEDGVLILWDLAEGFLFGV.

Testis-specific. Expressed in spermatogonia, spermatocytes and spermatids.

The polypeptide is WD repeat-containing protein 93 (Wdr93) (Mus musculus (Mouse)).